The following is a 332-amino-acid chain: MPIEFEQTFRNFLMEHQEKYNRTYHFLILMDSIITAAQRIELYYRTGALKGNLGMAGSINVQGESVMKMDDIANEIVLHYLAASNRVIQVVSEESDDIVDMNKDGGRYFVYFDPLDGSSNVAHGLPVGFLFGIAKRNLDGNMKGPEDFHLREGNDYIAAGMFVIPTGMFTLALRDAGCWRFHADETATYVKPMRMTLPDDPKKWELSFNSANTTVFSEKVQSWIQVNISKYKFRYIGALAGDFHRLLTNGGLFMYPAIVKHPDPKENRPQGKLRLLYEANVVAFMCREAGGDAIDETGTRIMEIKPAGHHQRTTLYVGSKPIIDELASLFKS.

Residues Glu93, Asp113, Leu115, and Asp116 each contribute to the Mg(2+) site. Substrate is bound by residues 116–119 (DGSS), Asn209, Tyr235, and Lys272. Mg(2+) is bound at residue Glu278.

It belongs to the FBPase class 1 family. In terms of assembly, homotetramer. It depends on Mg(2+) as a cofactor.

Its subcellular location is the cytoplasm. It catalyses the reaction beta-D-fructose 1,6-bisphosphate + H2O = beta-D-fructose 6-phosphate + phosphate. It participates in carbohydrate biosynthesis; gluconeogenesis. This Syntrophus aciditrophicus (strain SB) protein is Fructose-1,6-bisphosphatase class 1.